Reading from the N-terminus, the 192-residue chain is Inner membrane protein YohD (192 aa).

Residues 1-40 (MDLNTLISQYGYAALVIGSLAEGETVTLLGGVAAHQGLLK) are Periplasmic-facing. The chain crosses the membrane as a helical span at residues 41-61 (FPLVVLSVALGGMIGDQVLYL). Topologically, residues 62-121 (CGRRFGGKLLRRFSKHQDKIERAQKLIQRHPYLFVIGTRFMYGFRVIGPTLIGASQLPPK) are cytoplasmic. A helical transmembrane segment spans residues 122–142 (IFLPLNILGAFAWALIFTTIG). Topologically, residues 143–159 (YAGGQVIAPWLHNLDQH) are periplasmic. A helical transmembrane segment spans residues 160 to 180 (LKHWVWLILVVVLVVGVRWWL). Topologically, residues 181–192 (KRRGKKKPDHQA) are cytoplasmic.

It belongs to the DedA family.

It localises to the cell inner membrane. The protein is Inner membrane protein YohD (yohD) of Escherichia coli (strain K12).